A 248-amino-acid chain; its full sequence is Probable aquaporin TIP2-1 (248 aa).

2 helical membrane-spanning segments follow: residues 20–40 and 54–74; these read AYVA…GSAI and AGLV…VSVA. The NPA 1 motif lies at 83-85; sequence NPA. 3 helical membrane-spanning segments follow: residues 97–119, 141–161, and 168–188; these read TILT…CLLL, GVVM…ATAA, and LGTI…LAAG. An NPA 2 motif is present at residues 196–198; sequence NPA. The chain crosses the membrane as a helical span at residues 217–237; sequence WVGPLIGGGLAGLVYGDVFIG.

The protein belongs to the MIP/aquaporin (TC 1.A.8) family. TIP (TC 1.A.8.10) subfamily. In terms of tissue distribution, expressed in roots and anthers.

It localises to the vacuole membrane. Aquaporins facilitate the transport of water and small neutral solutes across cell membranes. May be involved in transport from the vacuolar compartment to the cytoplasm. This Oryza sativa subsp. japonica (Rice) protein is Probable aquaporin TIP2-1 (TIP2-1).